A 296-amino-acid polypeptide reads, in one-letter code: Ribosomal protein L11 methyltransferase (296 aa).

S-adenosyl-L-methionine is bound by residues Thr-139, Gly-163, Asp-185, and Asn-232.

Belongs to the methyltransferase superfamily. PrmA family.

It localises to the cytoplasm. The enzyme catalyses L-lysyl-[protein] + 3 S-adenosyl-L-methionine = N(6),N(6),N(6)-trimethyl-L-lysyl-[protein] + 3 S-adenosyl-L-homocysteine + 3 H(+). Methylates ribosomal protein L11. This chain is Ribosomal protein L11 methyltransferase, found in Rippkaea orientalis (strain PCC 8801 / RF-1) (Cyanothece sp. (strain PCC 8801)).